The primary structure comprises 85 residues: Small ribosomal subunit protein uS17 (85 aa).

The protein belongs to the universal ribosomal protein uS17 family. As to quaternary structure, part of the 30S ribosomal subunit.

One of the primary rRNA binding proteins, it binds specifically to the 5'-end of 16S ribosomal RNA. This is Small ribosomal subunit protein uS17 from Lachnoclostridium phytofermentans (strain ATCC 700394 / DSM 18823 / ISDg) (Clostridium phytofermentans).